Here is a 492-residue protein sequence, read N- to C-terminus: Prenylcysteine oxidase 1-like (492 aa).

The first 21 residues, 1-21 (MAHAARLLAALAALLAAAATG), serve as a signal peptide directing secretion. An N-linked (GlcNAc...) asparagine glycan is attached at asparagine 340.

This sequence belongs to the prenylcysteine oxidase family. The cofactor is FAD.

It localises to the secreted. Functionally, likely to have oxidoreductase activity. Required in the mevalonate pathway to regulate prenylation and enhances the bactericidal activity of neutrophils. The protein is Prenylcysteine oxidase 1-like (PCYOX1L) of Bos taurus (Bovine).